Reading from the N-terminus, the 233-residue chain is Inner kinetochore subunit fta4 (233 aa).

Threonine 189 and threonine 191 each carry phosphothreonine.

The protein belongs to the NKP1 family. In terms of assembly, component of the inner kinetochore constitutive centromere-associated network (CCAN) (also known as central kinetochore Sim4 complex in fission yeast), which is composed of at least cnl2, cnp3, cnp20, fta1, fta2, fta3, fta4, fta6, fta7, mal2, mhf1, mhf2, mis6, mis15, mis17, sim4 and wip1.

The protein resides in the nucleus. The protein localises to the chromosome. Its subcellular location is the centromere. It localises to the kinetochore. In terms of biological role, component of the kinetochore, a multiprotein complex that assembles on centromeric DNA and attaches chromosomes to spindle microtubules, mediating chromosome segregation and sister chromatid segregation during meiosis and mitosis. Component of the inner kinetochore constitutive centromere-associated network (CCAN), which serves as a structural platform for outer kinetochore assembly. Fta2, fta3 and fta4 associate with the central core (cnt) and inner repeat (inr) region of the centromere. The sequence is that of Inner kinetochore subunit fta4 (fta4) from Schizosaccharomyces pombe (strain 972 / ATCC 24843) (Fission yeast).